A 552-amino-acid polypeptide reads, in one-letter code: CTP synthase (552 aa).

Positions 1-270 (MTKFVFVTGG…DGLICDKLRL (270 aa)) are amidoligase domain. Ser13 is a binding site for CTP. Residue Ser13 coordinates UTP. Residues 14–19 (SLGKGI) and Asp71 each bind ATP. Mg(2+) contacts are provided by Asp71 and Glu144. CTP is bound by residues 151–153 (DIE), 191–196 (KTKPTQ), and Lys227. UTP contacts are provided by residues 191–196 (KTKPTQ) and Lys227. In terms of domain architecture, Glutamine amidotransferase type-1 spans 295 to 548 (QIAMVGKYVE…IKAAVEHQKP (254 aa)). Gly357 is a binding site for L-glutamine. Catalysis depends on Cys384, which acts as the Nucleophile; for glutamine hydrolysis. L-glutamine contacts are provided by residues 385–388 (LGMQ) and Glu408. Positions 432 to 451 (KTRSENSDLGGTMRLGAQSS) are disordered. L-glutamine is bound at residue Arg474. Active-site residues include His521 and Glu523.

This sequence belongs to the CTP synthase family. Homotetramer.

It catalyses the reaction UTP + L-glutamine + ATP + H2O = CTP + L-glutamate + ADP + phosphate + 2 H(+). It carries out the reaction L-glutamine + H2O = L-glutamate + NH4(+). The catalysed reaction is UTP + NH4(+) + ATP = CTP + ADP + phosphate + 2 H(+). It functions in the pathway pyrimidine metabolism; CTP biosynthesis via de novo pathway; CTP from UDP: step 2/2. Its activity is regulated as follows. Allosterically activated by GTP, when glutamine is the substrate; GTP has no effect on the reaction when ammonia is the substrate. The allosteric effector GTP functions by stabilizing the protein conformation that binds the tetrahedral intermediate(s) formed during glutamine hydrolysis. Inhibited by the product CTP, via allosteric rather than competitive inhibition. Catalyzes the ATP-dependent amination of UTP to CTP with either L-glutamine or ammonia as the source of nitrogen. Regulates intracellular CTP levels through interactions with the four ribonucleotide triphosphates. The chain is CTP synthase from Acidovorax sp. (strain JS42).